The chain runs to 471 residues: Ribulose bisphosphate carboxylase large chain (471 aa).

Lysine 5 carries the post-translational modification N6,N6,N6-trimethyllysine. Asparagine 114 and threonine 164 together coordinate substrate. Lysine 166 acts as the Proton acceptor in catalysis. Substrate is bound at residue lysine 168. The Mg(2+) site is built by lysine 192, aspartate 194, and glutamate 195. Lysine 192 carries the N6-carboxylysine modification. Histidine 285 acts as the Proton acceptor in catalysis. Substrate-binding residues include arginine 286, histidine 318, and serine 370.

This sequence belongs to the RuBisCO large chain family. Type I subfamily. As to quaternary structure, heterohexadecamer of 8 large chains and 8 small chains; disulfide-linked. The disulfide link is formed within the large subunit homodimers. Requires Mg(2+) as cofactor. Post-translationally, the disulfide bond which can form in the large chain dimeric partners within the hexadecamer appears to be associated with oxidative stress and protein turnover.

The protein resides in the plastid. Its subcellular location is the chloroplast. It catalyses the reaction 2 (2R)-3-phosphoglycerate + 2 H(+) = D-ribulose 1,5-bisphosphate + CO2 + H2O. The catalysed reaction is D-ribulose 1,5-bisphosphate + O2 = 2-phosphoglycolate + (2R)-3-phosphoglycerate + 2 H(+). Its function is as follows. RuBisCO catalyzes two reactions: the carboxylation of D-ribulose 1,5-bisphosphate, the primary event in carbon dioxide fixation, as well as the oxidative fragmentation of the pentose substrate in the photorespiration process. Both reactions occur simultaneously and in competition at the same active site. The protein is Ribulose bisphosphate carboxylase large chain of Strychnos nux-vomica (Poison nut).